The chain runs to 232 residues: Phosphatidylserine decarboxylase proenzyme (232 aa).

Ser-190 serves as the catalytic Schiff-base intermediate with substrate; via pyruvic acid. Ser-190 carries the post-translational modification Pyruvic acid (Ser); by autocatalysis.

It belongs to the phosphatidylserine decarboxylase family. PSD-A subfamily. In terms of assembly, heterodimer of a large membrane-associated beta subunit and a small pyruvoyl-containing alpha subunit. It depends on pyruvate as a cofactor. Post-translationally, is synthesized initially as an inactive proenzyme. Formation of the active enzyme involves a self-maturation process in which the active site pyruvoyl group is generated from an internal serine residue via an autocatalytic post-translational modification. Two non-identical subunits are generated from the proenzyme in this reaction, and the pyruvate is formed at the N-terminus of the alpha chain, which is derived from the carboxyl end of the proenzyme. The post-translation cleavage follows an unusual pathway, termed non-hydrolytic serinolysis, in which the side chain hydroxyl group of the serine supplies its oxygen atom to form the C-terminus of the beta chain, while the remainder of the serine residue undergoes an oxidative deamination to produce ammonia and the pyruvoyl prosthetic group on the alpha chain.

The protein resides in the cell membrane. The enzyme catalyses a 1,2-diacyl-sn-glycero-3-phospho-L-serine + H(+) = a 1,2-diacyl-sn-glycero-3-phosphoethanolamine + CO2. It participates in phospholipid metabolism; phosphatidylethanolamine biosynthesis; phosphatidylethanolamine from CDP-diacylglycerol: step 2/2. Functionally, catalyzes the formation of phosphatidylethanolamine (PtdEtn) from phosphatidylserine (PtdSer). The protein is Phosphatidylserine decarboxylase proenzyme of Rhizobium etli (strain ATCC 51251 / DSM 11541 / JCM 21823 / NBRC 15573 / CFN 42).